Consider the following 739-residue polypeptide: UPF0313 protein YgiQ (739 aa).

The 279-residue stretch at 372 to 650 (AYEMIRFSVN…KALLRYHDPA (279 aa)) folds into the Radical SAM core domain. [4Fe-4S] cluster-binding residues include cysteine 386, cysteine 390, and cysteine 393. The segment at 685 to 739 (REARRQNRNTRPALTKHTPMATQRQTPATAKKASSTQSRPVNAGAKKRPKAAVGR) is disordered. Residues 704-724 (MATQRQTPATAKKASSTQSRP) show a composition bias toward polar residues. Positions 729–739 (AKKRPKAAVGR) are enriched in basic residues.

This sequence belongs to the UPF0313 family. [4Fe-4S] cluster is required as a cofactor.

The sequence is that of UPF0313 protein YgiQ (ygiQ) from Escherichia coli (strain K12).